A 469-amino-acid chain; its full sequence is Nuclear hormone receptor family member nhr-154 (469 aa).

Positions 80-159 (PSKCLVCRNP…VGMNPMAIQA (80 aa)) form a DNA-binding region, nuclear receptor. NR C4-type zinc fingers lie at residues 83–103 (CLVC…CNGC) and 119–142 (CAKQ…CRAC). One can recognise an NR LBD domain in the interval 230–459 (LDSKPVLVVT…KMGTTFRKCI (230 aa)).

This sequence belongs to the nuclear hormone receptor family.

The protein resides in the nucleus. Functionally, orphan nuclear receptor. This Caenorhabditis elegans protein is Nuclear hormone receptor family member nhr-154 (nhr-154).